The chain runs to 276 residues: ATP synthase subunit a (276 aa).

Helical transmembrane passes span 47 to 67 (WHID…WLFY), 107 to 127 (IAPL…MDLI), 152 to 172 (DLNV…FYSI), 188 to 208 (PFNH…TLIA), 226 to 246 (LIFI…SVPW), and 247 to 267 (AIFH…LTIV).

Belongs to the ATPase A chain family. F-type ATPases have 2 components, CF(1) - the catalytic core - and CF(0) - the membrane proton channel. CF(1) has five subunits: alpha(3), beta(3), gamma(1), delta(1), epsilon(1). CF(0) has three main subunits: a(1), b(2) and c(9-12). The alpha and beta chains form an alternating ring which encloses part of the gamma chain. CF(1) is attached to CF(0) by a central stalk formed by the gamma and epsilon chains, while a peripheral stalk is formed by the delta and b chains.

Its subcellular location is the cell inner membrane. Functionally, key component of the proton channel; it plays a direct role in the translocation of protons across the membrane. This chain is ATP synthase subunit a, found in Shewanella halifaxensis (strain HAW-EB4).